The primary structure comprises 358 residues: Phosphoribosylformylglycinamidine cyclo-ligase (358 aa).

This sequence belongs to the AIR synthase family.

The protein resides in the cytoplasm. It catalyses the reaction 2-formamido-N(1)-(5-O-phospho-beta-D-ribosyl)acetamidine + ATP = 5-amino-1-(5-phospho-beta-D-ribosyl)imidazole + ADP + phosphate + H(+). It participates in purine metabolism; IMP biosynthesis via de novo pathway; 5-amino-1-(5-phospho-D-ribosyl)imidazole from N(2)-formyl-N(1)-(5-phospho-D-ribosyl)glycinamide: step 2/2. The sequence is that of Phosphoribosylformylglycinamidine cyclo-ligase from Nitrosococcus oceani (strain ATCC 19707 / BCRC 17464 / JCM 30415 / NCIMB 11848 / C-107).